Reading from the N-terminus, the 105-residue chain is Large ribosomal subunit protein uL24 (105 aa).

A disordered region spans residues 1–25 (MHIKKGDNVKVIAGKDKGKEGKVVS).

It belongs to the universal ribosomal protein uL24 family. Part of the 50S ribosomal subunit.

In terms of biological role, one of two assembly initiator proteins, it binds directly to the 5'-end of the 23S rRNA, where it nucleates assembly of the 50S subunit. Functionally, one of the proteins that surrounds the polypeptide exit tunnel on the outside of the subunit. This is Large ribosomal subunit protein uL24 from Staphylococcus saprophyticus subsp. saprophyticus (strain ATCC 15305 / DSM 20229 / NCIMB 8711 / NCTC 7292 / S-41).